The sequence spans 224 residues: Transcription factor MYB1 (224 aa).

HTH myb-type domains follow at residues 10 to 66 (LGRV…KPSI) and 67 to 117 (KRGH…YKKH). 2 DNA-binding regions (H-T-H motif) span residues 38–62 (WKRVPERAGLNRCRKSCRWRWLNYL) and 90–113 (WSLIAAKLPGRTINDVKNYCNTHL).

It localises to the nucleus. In terms of biological role, activates DODA1 and CYP76AD1 in the betalain red pigment pathway. This is Transcription factor MYB1 from Beta vulgaris (Sugar beet).